The primary structure comprises 307 residues: tRNA dimethylallyltransferase (307 aa).

Position 9–16 (9–16) interacts with ATP; that stretch reads GPTAIGKT. Residue 11–16 coordinates substrate; the sequence is TAIGKT. Interaction with substrate tRNA regions lie at residues 34–37 and 164–168; these read DSRQ and QRMMR.

It belongs to the IPP transferase family. Monomer. It depends on Mg(2+) as a cofactor.

It carries out the reaction adenosine(37) in tRNA + dimethylallyl diphosphate = N(6)-dimethylallyladenosine(37) in tRNA + diphosphate. Its function is as follows. Catalyzes the transfer of a dimethylallyl group onto the adenine at position 37 in tRNAs that read codons beginning with uridine, leading to the formation of N6-(dimethylallyl)adenosine (i(6)A). This chain is tRNA dimethylallyltransferase, found in Flavobacterium psychrophilum (strain ATCC 49511 / DSM 21280 / CIP 103535 / JIP02/86).